Consider the following 250-residue polypeptide: MLRANGRGLRELRPVTIERHYLKYAEGSALITVGDTRVICSATVEEKVPPFLKNTGKGWITAEYSLLPRSTKERTIREVTRGRLTGRTQEIQRLIGRSLRSVVDMSLLGERTIWLDCDVLQADGGTRTAAITGSFVALAEALAGLVAAGGVPAMPLKDFLAAVSVGLVDDELILDLDFQEDSHAGVDMNVVMTGSGQLVEVQGTAEGRPFTREQLTAMLDLAGEGIESLIAIQKQVLGDIASRVGTGNDK.

Phosphate is bound by residues Arg-87 and 125 to 127 (GTR).

This sequence belongs to the RNase PH family. In terms of assembly, homohexameric ring arranged as a trimer of dimers.

It carries out the reaction tRNA(n+1) + phosphate = tRNA(n) + a ribonucleoside 5'-diphosphate. Its function is as follows. Phosphorolytic 3'-5' exoribonuclease that plays an important role in tRNA 3'-end maturation. Removes nucleotide residues following the 3'-CCA terminus of tRNAs; can also add nucleotides to the ends of RNA molecules by using nucleoside diphosphates as substrates, but this may not be physiologically important. Probably plays a role in initiation of 16S rRNA degradation (leading to ribosome degradation) during starvation. The chain is Ribonuclease PH from Moorella thermoacetica (strain ATCC 39073 / JCM 9320).